The chain runs to 321 residues: Glucokinase (321 aa).

8–13 (GDVGGT) contacts ATP.

The protein belongs to the bacterial glucokinase family.

The protein resides in the cytoplasm. The enzyme catalyses D-glucose + ATP = D-glucose 6-phosphate + ADP + H(+). The sequence is that of Glucokinase from Escherichia coli (strain SMS-3-5 / SECEC).